The primary structure comprises 265 residues: Thiazole synthase (265 aa).

The active-site Schiff-base intermediate with DXP is Lys107. Residues Gly168, Ala194–Gly195, and Asn216–Thr217 contribute to the 1-deoxy-D-xylulose 5-phosphate site.

The protein belongs to the ThiG family. Homotetramer. Forms heterodimers with either ThiH or ThiS.

The protein resides in the cytoplasm. The catalysed reaction is [ThiS sulfur-carrier protein]-C-terminal-Gly-aminoethanethioate + 2-iminoacetate + 1-deoxy-D-xylulose 5-phosphate = [ThiS sulfur-carrier protein]-C-terminal Gly-Gly + 2-[(2R,5Z)-2-carboxy-4-methylthiazol-5(2H)-ylidene]ethyl phosphate + 2 H2O + H(+). It participates in cofactor biosynthesis; thiamine diphosphate biosynthesis. Functionally, catalyzes the rearrangement of 1-deoxy-D-xylulose 5-phosphate (DXP) to produce the thiazole phosphate moiety of thiamine. Sulfur is provided by the thiocarboxylate moiety of the carrier protein ThiS. In vitro, sulfur can be provided by H(2)S. In Pseudomonas paraeruginosa (strain DSM 24068 / PA7) (Pseudomonas aeruginosa (strain PA7)), this protein is Thiazole synthase.